Reading from the N-terminus, the 436-residue chain is Probable glucose-6-phosphate isomerase (436 aa).

The Proton donor role is filled by glutamate 272. Catalysis depends on residues histidine 293 and lysine 404.

Belongs to the GPI family.

Its subcellular location is the cytoplasm. The enzyme catalyses alpha-D-glucose 6-phosphate = beta-D-fructose 6-phosphate. The protein operates within carbohydrate biosynthesis; gluconeogenesis. Its pathway is carbohydrate degradation; glycolysis; D-glyceraldehyde 3-phosphate and glycerone phosphate from D-glucose: step 2/4. In terms of biological role, catalyzes the reversible isomerization of glucose-6-phosphate to fructose-6-phosphate. This is Probable glucose-6-phosphate isomerase from Haloarcula marismortui (strain ATCC 43049 / DSM 3752 / JCM 8966 / VKM B-1809) (Halobacterium marismortui).